Consider the following 118-residue polypeptide: Myotrophin (118 aa).

ANK repeat units lie at residues Met-1–Arg-30, Gly-34–Asp-65, and His-67–Gly-98.

Belongs to the myotrophin family.

The protein resides in the cytoplasm. The protein localises to the nucleus. It localises to the perinuclear region. Functionally, regulates NF-kappa-B transcription factor activity. Promotes growth of cardiomyocytes, but not cardiomyocyte proliferation. Promotes cardiac muscle hypertrophy. Plays a role in the regulation of the growth of actin filaments. Inhibits the activity of the F-actin-capping protein complex. This is Myotrophin (MTPN) from Gallus gallus (Chicken).